A 370-amino-acid chain; its full sequence is MNRVGIDVDHMIGVLLLAVVVVFWVGASCLTNELLETNAYNKPFFLTYLNISSFALYLTPDLWRIIQSRRKSLQERTERTLPIHTQESFSEFLPLLSSTPSTSSNLSSIADTKVKDTMRLSLLFCVLWFVANLAANAALSYTTVASSTILSSTSSFFTLFLATSLGIETFSTKKLLGLFVSLFGIILIVMQSSKQQDSVSASSFLVGNTLALLGSLGYSVYTTLLKYEISSKGLRLDIQMFLGYVGIFTFLLFWPILIILDITHMETFELPSNFHISFLVMLNCIIIFVSDYFWCKALILTSPLVVTVALTFTIPLAMFADFVWREAFFTPWYIIGVIFIFVSFFLVNHRGESAVEKDCAAVEKGPILDA.

At 1-10 (MNRVGIDVDH) the chain is on the cytoplasmic side. A helical membrane pass occupies residues 11–31 (MIGVLLLAVVVVFWVGASCLT). Over 32 to 42 (NELLETNAYNK) the chain is Mitochondrial intermembrane. A helical membrane pass occupies residues 43–63 (PFFLTYLNISSFALYLTPDLW). At 64-119 (RIIQSRRKSLQERTERTLPIHTQESFSEFLPLLSSTPSTSSNLSSIADTKVKDTMR) the chain is on the cytoplasmic side. The helical transmembrane segment at 120–140 (LSLLFCVLWFVANLAANAALS) threads the bilayer. Residues 129–190 (FVANLAANAA…SLFGIILIVM (62 aa)) enclose the EamA domain. The Mitochondrial intermembrane segment spans residues 141 to 146 (YTTVAS). A helical membrane pass occupies residues 147-167 (STILSSTSSFFTLFLATSLGI). Over 168–169 (ET) the chain is Cytoplasmic. Residues 170-190 (FSTKKLLGLFVSLFGIILIVM) form a helical membrane-spanning segment. Topologically, residues 191-203 (QSSKQQDSVSASS) are mitochondrial intermembrane. The chain crosses the membrane as a helical span at residues 204-224 (FLVGNTLALLGSLGYSVYTTL). Residues 225 to 239 (LKYEISSKGLRLDIQ) are Cytoplasmic-facing. Residues 240 to 260 (MFLGYVGIFTFLLFWPILIIL) traverse the membrane as a helical segment. Residues 261–273 (DITHMETFELPSN) lie on the Mitochondrial intermembrane side of the membrane. A helical membrane pass occupies residues 274–294 (FHISFLVMLNCIIIFVSDYFW). Residues 295-303 (CKALILTSP) are Cytoplasmic-facing. The helical transmembrane segment at 304-324 (LVVTVALTFTIPLAMFADFVW) threads the bilayer. Over 325–326 (RE) the chain is Mitochondrial intermembrane. Residues 327–347 (AFFTPWYIIGVIFIFVSFFLV) traverse the membrane as a helical segment. The Cytoplasmic segment spans residues 348–370 (NHRGESAVEKDCAAVEKGPILDA).

It is found in the mitochondrion membrane. Its function is as follows. May be involved in thiaminediphosphate transport across the mitochondrial membrane. The chain is Thiamine-repressible mitochondrial transport protein THI74 (THI74) from Saccharomyces cerevisiae (strain ATCC 204508 / S288c) (Baker's yeast).